The following is a 372-amino-acid chain: Histidinol-phosphate aminotransferase (372 aa).

At Lys-234 the chain carries N6-(pyridoxal phosphate)lysine.

The protein belongs to the class-II pyridoxal-phosphate-dependent aminotransferase family. Histidinol-phosphate aminotransferase subfamily. Homodimer. Pyridoxal 5'-phosphate serves as cofactor.

It catalyses the reaction L-histidinol phosphate + 2-oxoglutarate = 3-(imidazol-4-yl)-2-oxopropyl phosphate + L-glutamate. Its pathway is amino-acid biosynthesis; L-histidine biosynthesis; L-histidine from 5-phospho-alpha-D-ribose 1-diphosphate: step 7/9. This Corynebacterium efficiens (strain DSM 44549 / YS-314 / AJ 12310 / JCM 11189 / NBRC 100395) protein is Histidinol-phosphate aminotransferase (hisC).